We begin with the raw amino-acid sequence, 191 residues long: Probable nicotinate-nucleotide adenylyltransferase (191 aa).

The protein belongs to the NadD family.

The catalysed reaction is nicotinate beta-D-ribonucleotide + ATP + H(+) = deamido-NAD(+) + diphosphate. It functions in the pathway cofactor biosynthesis; NAD(+) biosynthesis; deamido-NAD(+) from nicotinate D-ribonucleotide: step 1/1. Catalyzes the reversible adenylation of nicotinate mononucleotide (NaMN) to nicotinic acid adenine dinucleotide (NaAD). This is Probable nicotinate-nucleotide adenylyltransferase from Staphylococcus epidermidis (strain ATCC 12228 / FDA PCI 1200).